A 567-amino-acid chain; its full sequence is Thiol:disulfide interchange protein DsbD (567 aa).

Positions 1–19 (MAQRIFTLILLLCSTSAFA) are cleaved as a signal peptide. Cystine bridges form between cysteine 122-cysteine 128 and cysteine 185-cysteine 307. A run of 8 helical transmembrane segments spans residues 166-186 (LPFS…TPCV), 211-231 (LLAF…GLVV), 246-266 (YVLI…FGLF), 299-319 (IAGL…LLYI), 326-346 (WLGG…LMLV), 360-380 (WMAH…VFLL), 387-407 (AWGL…AFIT), and 418-438 (IVQI…QDWA). The region spanning 435-567 (QDWAFGSPSA…FSAHLHDRQP (133 aa)) is the Thioredoxin domain. The cysteines at positions 482 and 485 are disulfide-linked.

It belongs to the thioredoxin family. DsbD subfamily.

It localises to the cell inner membrane. The catalysed reaction is [protein]-dithiol + NAD(+) = [protein]-disulfide + NADH + H(+). The enzyme catalyses [protein]-dithiol + NADP(+) = [protein]-disulfide + NADPH + H(+). Its function is as follows. Required to facilitate the formation of correct disulfide bonds in some periplasmic proteins and for the assembly of the periplasmic c-type cytochromes. Acts by transferring electrons from cytoplasmic thioredoxin to the periplasm. This transfer involves a cascade of disulfide bond formation and reduction steps. The protein is Thiol:disulfide interchange protein DsbD of Salmonella paratyphi A (strain ATCC 9150 / SARB42).